The primary structure comprises 403 residues: cAMP-dependent protein kinase regulatory subunit (403 aa).

The interval 1–155 (MADYTIPSEL…RIQASIGNNF (155 aa)) is dimerization and phosphorylation. The segment at 79–125 (YAYSTDDGFGTEDDDDDDDDEDDEAAIPPPVVNRGRRTSVSAESMAP) is disordered. Residues 87–103 (FGTEDDDDDDDDEDDEA) are compositionally biased toward acidic residues. Phosphoserine is present on Ser-117. 3',5'-cyclic AMP contacts are provided by residues 156 to 278 (LFRN…EEVP), Glu-226, Arg-235, 279 to 403 (LLSS…PGEH), Glu-349, and Arg-358.

Belongs to the cAMP-dependent kinase regulatory chain family. In terms of assembly, tetramer, composed of 2 regulatory (R) and 2 catalytic (C) subunits. In the presence of cAMP it dissociates into 2 active monomeric C subunits and an R dimer that binds four cAMP molecules.

This Blastocladiella emersonii (Aquatic fungus) protein is cAMP-dependent protein kinase regulatory subunit (PKAR).